A 191-amino-acid chain; its full sequence is Potassium-transporting ATPase KdpC subunit (191 aa).

The chain crosses the membrane as a helical span at residues 13–35; that stretch reads VLFTGLCGLAYPLAITGVAQAVL. The disordered stretch occupies residues 112–132; sequence SGPVPADAVTSSASGLDPDIS.

It belongs to the KdpC family. In terms of assembly, the system is composed of three essential subunits: KdpA, KdpB and KdpC.

The protein resides in the cell inner membrane. Its function is as follows. Part of the high-affinity ATP-driven potassium transport (or Kdp) system, which catalyzes the hydrolysis of ATP coupled with the electrogenic transport of potassium into the cytoplasm. This subunit acts as a catalytic chaperone that increases the ATP-binding affinity of the ATP-hydrolyzing subunit KdpB by the formation of a transient KdpB/KdpC/ATP ternary complex. This is Potassium-transporting ATPase KdpC subunit from Allorhizobium ampelinum (strain ATCC BAA-846 / DSM 112012 / S4) (Agrobacterium vitis (strain S4)).